The chain runs to 404 residues: Immediate early response gene 5-like protein (404 aa).

Disordered stretches follow at residues 86–107, 160–231, and 308–327; these read AADF…EPAA, AALQ…APAS, and QEEE…EPPG. Residues 177 to 194 are compositionally biased toward pro residues; the sequence is PLQPGPAPLPLPLPPPAP. A compositionally biased stretch (low complexity) spans 195–231; sequence AALCPRDPRAPAACSAPPGAAPPAAAASPPASPAPAS. Residues 308–318 are compositionally biased toward acidic residues; the sequence is QEEEEDDEEDA.

It belongs to the IER family.

This is Immediate early response gene 5-like protein (IER5L) from Homo sapiens (Human).